The following is a 188-amino-acid chain: Ubiquitin-conjugating enzyme E2-21 kDa (188 aa).

Residues 3–182 enclose the UBC core domain; it reads STEKRLLKEY…VHYYIAKYSA (180 aa). Cys-119 functions as the Glycyl thioester intermediate in the catalytic mechanism.

Belongs to the ubiquitin-conjugating enzyme family.

The catalysed reaction is S-ubiquitinyl-[E1 ubiquitin-activating enzyme]-L-cysteine + [E2 ubiquitin-conjugating enzyme]-L-cysteine = [E1 ubiquitin-activating enzyme]-L-cysteine + S-ubiquitinyl-[E2 ubiquitin-conjugating enzyme]-L-cysteine.. It participates in protein modification; protein ubiquitination. Functionally, catalyzes the covalent attachment of ubiquitin to other proteins. Essential for peroxisome biogenesis. Required for UBC4-independent ubiquitination of PEX5. The sequence is that of Ubiquitin-conjugating enzyme E2-21 kDa (PEX4) from Pichia angusta (Yeast).